We begin with the raw amino-acid sequence, 479 residues long: Beta-amyrin 28-monooxygenase (479 aa).

Residues 5-25 traverse the membrane as a helical segment; it reads FYLSLLLLFVTFISLSLFFIF. Cysteine 426 contacts heme.

It belongs to the cytochrome P450 family. Requires heme as cofactor. In terms of tissue distribution, expressed in roots, nodules and flowers.

It localises to the membrane. The catalysed reaction is beta-amyrin + 3 reduced [NADPH--hemoprotein reductase] + 3 O2 = oleanolate + 3 oxidized [NADPH--hemoprotein reductase] + 4 H2O + 4 H(+). Catalyzes the carboxylation of beta-amyrin at the C-28 position to form oleanolic acid. Involved in an early step in the hemolytic saponin biosynthetic pathway. Catalyzes the carboxylation of alpha-amyrin and lupeol at the C-28 position to form ursolic acid and betulinic acid respectively. This chain is Beta-amyrin 28-monooxygenase, found in Medicago truncatula (Barrel medic).